The chain runs to 285 residues: MDGIKILATFSVLVLFYKLFTYSKKGGVSQKEAVKALLKTEFREFELVEKEQLTHNTAKYKFKLADESHVLGLPIGQHITVKTIIGGKPVSRSYTPTSLDEECVGFFELLVKSYPEGNISKHIGDMKIGEKINISGPRGFYEYVPNVHKHLAMVAGGTGITPMFQIMKAIARDPSDKTRVTLLYGNVLEEDILLKQELDDLVKQRPDQFKITYLLDKPERDDWEGGVGYVTLDLMKESFPSAEEDVQLLVCGPPGMVSSVKRNAVALGFPRAKPVSKMEDRVFVF.

Residues 7-23 (LATFSVLVLFYKLFTYS) traverse the membrane as a helical segment. The FAD-binding FR-type domain occupies 40–144 (TEFREFELVE…SGPRGFYEYV (105 aa)). Residues 124–139 (GDMK…GPRG) and 150–182 (HLAM…RVTL) each bind FAD.

Belongs to the flavoprotein pyridine nucleotide cytochrome reductase family. Monomer. Component of the 2-(3-amino-3-carboxypropyl)histidine synthase complex composed of DPH1, DPH2, DPH3 and a NADH-dependent reductase, predominantly CBR1. FAD is required as a cofactor.

It is found in the mitochondrion outer membrane. It carries out the reaction 2 Fe(III)-[cytochrome b5] + NADH = 2 Fe(II)-[cytochrome b5] + NAD(+) + H(+). It catalyses the reaction 2 Fe(3+)-[Dph3] + NADH = 2 Fe(2+)-[Dph3] + NAD(+) + H(+). Its pathway is protein modification; peptidyl-diphthamide biosynthesis. NADH-dependent reductase for DPH3 and cytochrome b5. Required for the first step of diphthamide biosynthesis, a post-translational modification of histidine which occurs in elongation factor 2. DPH1 and DPH2 transfer a 3-amino-3-carboxypropyl (ACP) group from S-adenosyl-L-methionine (SAM) to a histidine residue, the reaction is assisted by a reduction system comprising DPH3 and a NADH-dependent reductase, predominantly CBR1. By reducing DPH3, also involved in the formation of the tRNA wobble base modification mcm5s 2U (5-methoxycarbonylmethyl-2-thiouridine), mediated by the elongator complex. The cytochrome b5/NADH cytochrome b5 reductase electron transfer system supports the catalytic activity of several sterol biosynthetic enzymes. This chain is NADH-cytochrome b5 reductase 1 (CBR1), found in Candida glabrata (strain ATCC 2001 / BCRC 20586 / JCM 3761 / NBRC 0622 / NRRL Y-65 / CBS 138) (Yeast).